The chain runs to 1230 residues: Potassium channel subfamily T member 1 (1230 aa).

A disordered region spans residues 1-37 (MARAKLPRSPSEGKAGPGGAPAGAAAPEEPHGLSPLL). The Cytoplasmic segment spans residues 1–93 (MARAKLPRSP…LFFIKNQRSS (93 aa)). A helical transmembrane segment spans residues 94–126 (LRIRLFNFSLKLLTCLLYIVRVLLDDPALGIGC). The Extracellular segment spans residues 127 to 153 (WGCPKQNYSFNDSSSEINWAPILWVER). N-linked (GlcNAc...) asparagine glycosylation is found at Asn133 and Asn137. The helical transmembrane segment at 154 to 178 (KMTLWAIQVIVAIISFLETMLLIYL) threads the bilayer. The Cytoplasmic segment spans residues 179–192 (SYKGNIWEQIFRVS). The chain crosses the membrane as a helical span at residues 193 to 208 (FVLEMINTLPFIITIF). Residues 209 to 215 (WPPLRNL) are Extracellular-facing. Residues 216–233 (FIPVFLNCWLAKHALENM) traverse the membrane as a helical segment. Residues 234-246 (INDFHRAILRTQS) lie on the Cytoplasmic side of the membrane. The chain crosses the membrane as a helical span at residues 247-274 (AMFNQVLILFCTLLCLVFTGTCGIQHLE). Residues 275-281 (RAGENLS) are Extracellular-facing. Residues 282 to 302 (LLTSFYFCIVTFSTVGYGDVT) constitute an intramembrane region (pore-forming). K(+) contacts are provided by Val296 and Gly297. Over 303-304 (PK) the chain is Extracellular. Residues 305 to 338 (IWPSQLLVVIMICVALVVLPLQFEELVYLWMERQ) traverse the membrane as a helical segment. Residues 339 to 1230 (KSGGNYSRHR…NPETRDETQL (892 aa)) are Cytoplasmic-facing. Positions 352 to 488 (EKHVVLCVSS…FHVKFADHVV (137 aa)) constitute an RCK N-terminal 1 domain. Leu513, His516, Ser538, and Asn540 together coordinate Na(+). A disordered region spans residues 660–689 (TEHRPTQSGGGGGGSKLALPTENGSGSRRP). Zn(2+) contacts are provided by Cys758 and Cys759. K(+) contacts are provided by Arg761 and Lys764. Residues Arg761 and Lys764 each coordinate Na(+). 2 residues coordinate Zn(2+): Cys766 and His768. Asn769, Tyr771, Tyr777, and Gly778 together coordinate K(+). Tyr771 contributes to the Na(+) binding site. Residue Phe779 coordinates Na(+). An RCK N-terminal 2 domain is found at 781–921 (NKLIIVSAET…QFRAKDSYSL (141 aa)). Residues Ser787, Leu818, Asp820, Gly842, and Asp865 each coordinate K(+). 2 disordered regions span residues 1048 to 1078 (EVKGPWGSRAGTGGSSQGRHTGGGDPAEHPL) and 1204 to 1230 (SSSQSRKSSCSHKLSSCNPETRDETQL). Residues 1057-1072 (AGTGGSSQGRHTGGGD) show a composition bias toward gly residues. Residues 1204 to 1219 (SSSQSRKSSCSHKLSS) are compositionally biased toward low complexity.

This sequence belongs to the potassium channel family. Calcium-activated (TC 1.A.1.3) subfamily. KCa4.1/KCNT1 sub-subfamily. Homotetramer; which constitutes the Na(+)-activated K(+) channel. Interacts with KCNT2; these heterodimer channels differ from the homomers in their unitary conductance, kinetic behavior, subcellular localization, and response to activation of protein kinase C. Interacts (via C-terminus) with FMR1; this interaction alters gating properties of KCNT1. Interacts with CRBN via its cytoplasmic C-terminus. Post-translationally, phosphorylated by protein kinase C. Phosphorylation of the C-terminal domain increases channel activity. Highest expression in liver, brain and spinal cord. Lowest expression in skeletal muscle.

It is found in the cell membrane. The catalysed reaction is K(+)(in) = K(+)(out). With respect to regulation, activated by high intracellular Na(+). In addition to activation by Na(+), is cooperatively activated by intracellular Cl(-) levels. Inhibited by Zn(2+). Activated upon stimulation of G-protein coupled receptors, such as CHRM1 and GRIA1. Sodium-activated K(+) channel. Acts as an important mediator of neuronal membrane excitability. Contributes to the delayed outward currents. Regulates neuronal bursting in sensory neurons. Contributes to synaptic development and plasticity. The chain is Potassium channel subfamily T member 1 from Homo sapiens (Human).